The sequence spans 114 residues: MTTKIERRIKIKYRVRNKVSGTAARPRMSVFRSNKQIYVQIIDDLSGKTLAAASSLGMTEKLPKKEVAAKVGEIIAKKAQEAGITTVVFDRNGYLYHGRVKEVADAARNGGLKF.

Belongs to the universal ribosomal protein uL18 family. Part of the 50S ribosomal subunit; part of the 5S rRNA/L5/L18/L25 subcomplex. Contacts the 5S and 23S rRNAs.

This is one of the proteins that bind and probably mediate the attachment of the 5S RNA into the large ribosomal subunit, where it forms part of the central protuberance. The polypeptide is Large ribosomal subunit protein uL18 (Bacteroides fragilis (strain ATCC 25285 / DSM 2151 / CCUG 4856 / JCM 11019 / LMG 10263 / NCTC 9343 / Onslow / VPI 2553 / EN-2)).